Reading from the N-terminus, the 494-residue chain is Trigger factor (494 aa).

In terms of domain architecture, PPIase FKBP-type spans 169 to 254 (GDRITMDYVG…VKEVAAPADV (86 aa)). A disordered region spans residues 441–494 (LAEEEGEAKAETKKAAPKKKAAAKAEAADAGEGEEAAPKKKAAPKKKAADESAE).

This sequence belongs to the FKBP-type PPIase family. Tig subfamily.

It localises to the cytoplasm. The enzyme catalyses [protein]-peptidylproline (omega=180) = [protein]-peptidylproline (omega=0). Its function is as follows. Involved in protein export. Acts as a chaperone by maintaining the newly synthesized protein in an open conformation. Functions as a peptidyl-prolyl cis-trans isomerase. This Rhizobium johnstonii (strain DSM 114642 / LMG 32736 / 3841) (Rhizobium leguminosarum bv. viciae) protein is Trigger factor.